We begin with the raw amino-acid sequence, 377 residues long: UPF0754 membrane protein LMHCC_0318 (377 aa).

Helical transmembrane passes span 1–21 (MSVLFTILLMAVIGGFIGAMT) and 357–377 (YLGGILGGFIGVIQGILAMWI).

Belongs to the UPF0754 family.

It is found in the cell membrane. This is UPF0754 membrane protein LMHCC_0318 from Listeria monocytogenes serotype 4a (strain HCC23).